Consider the following 571-residue polypeptide: Sulfite reductase [NADPH] hemoprotein beta-component (571 aa).

Positions 436, 442, 481, and 485 each coordinate [4Fe-4S] cluster. Cys485 is a siroheme binding site.

It belongs to the nitrite and sulfite reductase 4Fe-4S domain family. In terms of assembly, alpha(8)-beta(8). The alpha component is a flavoprotein, the beta component is a hemoprotein. Requires siroheme as cofactor. [4Fe-4S] cluster is required as a cofactor.

It catalyses the reaction hydrogen sulfide + 3 NADP(+) + 3 H2O = sulfite + 3 NADPH + 4 H(+). It functions in the pathway sulfur metabolism; hydrogen sulfide biosynthesis; hydrogen sulfide from sulfite (NADPH route): step 1/1. Functionally, component of the sulfite reductase complex that catalyzes the 6-electron reduction of sulfite to sulfide. This is one of several activities required for the biosynthesis of L-cysteine from sulfate. In Anoxybacillus flavithermus (strain DSM 21510 / WK1), this protein is Sulfite reductase [NADPH] hemoprotein beta-component.